The chain runs to 219 residues: Octanoyltransferase (219 aa).

Residues 32–207 (ENSQDEIWIV…TLSQELGLDK (176 aa)) enclose the BPL/LPL catalytic domain. Residues 71–78 (RGGQVTYH), 138–140 (SLG), and 151–153 (GLA) each bind substrate. C169 acts as the Acyl-thioester intermediate in catalysis.

This sequence belongs to the LipB family.

It localises to the cytoplasm. The catalysed reaction is octanoyl-[ACP] + L-lysyl-[protein] = N(6)-octanoyl-L-lysyl-[protein] + holo-[ACP] + H(+). The protein operates within protein modification; protein lipoylation via endogenous pathway; protein N(6)-(lipoyl)lysine from octanoyl-[acyl-carrier-protein]: step 1/2. Catalyzes the transfer of endogenously produced octanoic acid from octanoyl-acyl-carrier-protein onto the lipoyl domains of lipoate-dependent enzymes. Lipoyl-ACP can also act as a substrate although octanoyl-ACP is likely to be the physiological substrate. The polypeptide is Octanoyltransferase (Shewanella halifaxensis (strain HAW-EB4)).